The chain runs to 1410 residues: SNF2 domain-containing protein CLASSY 3 (1410 aa).

Basic residues predominate over residues 1 to 12; the sequence is MECIGKRVKSRS. 6 disordered regions span residues 1–74, 87–108, 209–330, 344–376, 428–593, and 632–654; these read MECI…SVPN, DLNVEKKSGPSSSRLTDGSEQN, GEIE…PIKR, RSGSSLTKPRERDNKIQKLNHREEEKKERQREV, NVSK…LKDK, and EDEADELVSSAEDQSQEQAREDH. Residues 22–29 carry the Nuclear localization signal 1 motif; sequence RKKMETVA. The span at 95 to 108 shows a compositional bias: polar residues; sequence GPSSSRLTDGSEQN. Residues 245–266 are compositionally biased toward acidic residues; that stretch reads SDGEDSSSETDEEEEENQDSED. Residues 248–278 are a coiled coil; that stretch reads EDSSSETDEEEEENQDSEDNNTKDNVTVESL. The span at 276-301 shows a compositional bias: low complexity; it reads ESLSSEDPSSSSSSSSSSSSSSSSSS. Residues 306-323 show a composition bias toward basic and acidic residues; the sequence is SYVKEVVGDNRDDDDLRK. A Nuclear localization signal 2 motif is present at residues 328 to 335; sequence IKRVSLVE. Over residues 351-376 the composition is skewed to basic and acidic residues; it reads KPRERDNKIQKLNHREEEKKERQREV. Positions 356–377 form a coiled coil; it reads DNKIQKLNHREEEKKERQREVV. The segment covering 428-446 has biased composition (polar residues); that stretch reads NVSKYEDSVSINSGKTTGA. Composition is skewed to basic and acidic residues over residues 450-463 and 488-504; these read PEVENPETGKELNT and EPSRPEIYSSEKAKEVQ. Positions 576-587 are enriched in low complexity; it reads SSISSGDGYESD. Positions 850–1060 constitute a Helicase ATP-binding domain; sequence FENSDETGGC…CNVLGLARPK (211 aa). 863 to 870 serves as a coordination point for ATP; it reads HAPGTGKT. The short motif at 1011 to 1014 is the DEAH box element; that stretch reads DEAH. The short motif at 1132 to 1139 is the Nuclear localization signal 3 element; it reads QRRVLESI. The Helicase C-terminal domain maps to 1206 to 1359; the sequence is EFVELCEVIK…ELVFACSSRH (154 aa).

This sequence belongs to the SNF2/RAD54 helicase family. As to quaternary structure, interacts with NRPD1.

It localises to the nucleus. Probable chromatin remodeling factor. This Arabidopsis thaliana (Mouse-ear cress) protein is SNF2 domain-containing protein CLASSY 3 (CLSY3).